Reading from the N-terminus, the 288-residue chain is L-xylulose reductase (288 aa).

Residues isoleucine 39, asparagine 113, and lysine 147 each coordinate NADP(+). The active-site Proton donor is the serine 181. Residues tyrosine 196, lysine 200, isoleucine 228, and threonine 230 each coordinate NADP(+). Tyrosine 196 (proton acceptor) is an active-site residue. Lysine 200 acts as the Lowers pKa of active site Tyr in catalysis.

This sequence belongs to the short-chain dehydrogenases/reductases (SDR) family.

The enzyme catalyses xylitol + NADP(+) = L-xylulose + NADPH + H(+). The protein operates within carbohydrate degradation; L-arabinose degradation via L-arabinitol; D-xylulose 5-phosphate from L-arabinose (fungal route): step 3/5. Its function is as follows. L-xylulose reductase involved in the catabolism of L-arabinose through an oxidoreductive pathway. Catalyzes the NADPH-dependent reduction of L-xylulose. Is also able to convert D-xylulose, D-ribulose, L-sorbose, and D-fructose to their corresponding polyols. This is L-xylulose reductase from Hypocrea jecorina (strain QM6a) (Trichoderma reesei).